Consider the following 584-residue polypeptide: uncharacterized protein (584 aa).

A helical membrane pass occupies residues 15–35; it reads FIFFVLVFFICIIFGCIYESL. Polar residues-rich tracts occupy residues 184–194 and 204–225; these read DVSTENSYTHN and GKRT…SYNI. The disordered stretch occupies residues 184–226; sequence DVSTENSYTHNNSRDDEPQNGKRTYNNQSNNNLPYDNSSYNIS. Coiled coils occupy residues 267-319 and 436-477; these read DNYP…DNYP and RDNH…HYKR.

The protein localises to the membrane. This is an uncharacterized protein from Plasmodium falciparum (isolate 3D7).